The sequence spans 367 residues: YVSLSPDSVFNIITDDISHQILSRSNCERSKRPKRVFSIYWNVPTFMCHQYGMNFDEVTDFNIKHNSKDNFRGETISIYYDPGKFPALMPLKNGNYEERNGGVPQRGNITIHLQQFNEDLDKMTPDKNFGGIGVIDFERWKPIFRQNWGNTEIHKKYSIELVRKEHPKWSESMIEAEATKKFEKYARYFMEETLKLAKKTRKRAKWGYYGFPYCYNVTPNNPGPDCDAKATIENDRLSWMYNNQEILFPSVYVRHEQKPEERVYLVQGRIKEAVRISNNLEHSPSVLAYWWYVYQDKMDIYLSETDVEKTFQEIVTNGGDGIIIWGSSSDVNSLSKCKRLREYLLNTLGPFAVNVTETVNGRSSLNF.

Disulfide bonds link C48–C337 and C214–C226. N108 carries N-linked (GlcNAc...) asparagine glycosylation. E138 (proton donor) is an active-site residue. N-linked (GlcNAc...) asparagine glycosylation is present at N354.

The protein belongs to the glycosyl hydrolase 56 family.

The enzyme catalyses Random hydrolysis of (1-&gt;4)-linkages between N-acetyl-beta-D-glucosamine and D-glucuronate residues in hyaluronate.. May play a role in reproduction. The chain is Hyaluronidase from Polistes annularis (Paper wasp).